A 231-amino-acid polypeptide reads, in one-letter code: Protein C activator (231 aa).

One can recognise a Peptidase S1 domain in the interval 1 to 222; the sequence is VIGGDECNIN…YTDWIQSIIS (222 aa). 6 disulfides stabilise this stretch: Cys7–Cys138, Cys25–Cys41, Cys73–Cys229, Cys117–Cys183, Cys149–Cys162, and Cys173–Cys198. Residue Asn21 is glycosylated (N-linked (GlcNAc...) asparagine). His40 serves as the catalytic Charge relay system. Asn78 is a glycosylation site (N-linked (GlcNAc...) asparagine). Catalysis depends on Asp85, which acts as the Charge relay system. Residue Asn129 is glycosylated (N-linked (GlcNAc...) asparagine). Ser177 serves as the catalytic Charge relay system.

Belongs to the peptidase S1 family. Snake venom subfamily. In terms of assembly, monomer. As to expression, expressed by the venom gland.

It localises to the secreted. Snake venom serine protease that selectively cleaves the heavy chain of protein C (PROC). This activation is thrombomodulin-independent. In Agkistrodon contortrix contortrix (Southern copperhead), this protein is Protein C activator.